The primary structure comprises 308 residues: S-crystallin SL18 (308 aa).

A GST N-terminal domain is found at 2–80 (PKYTLYYFNS…YLARQFGFYG (79 aa)). A disordered region spans residues 165–205 (EMRSQDSMVEPPSQKLSPELESQSSLCSERPQCGPPDPMMG). The span at 178–191 (QKLSPELESQSSLC) shows a compositional bias: polar residues. Positions 185-308 (ESQSSLCSER…YFTLRNYTDF (124 aa)) constitute a GST C-terminal domain.

The protein belongs to the GST superfamily. As to expression, lens.

Functionally, S-crystallins are structural components of squids and octopi eye lens. Contains relatively little if any GST activity. This Nototodarus sloanii (Wellington flying squid) protein is S-crystallin SL18.